Consider the following 433-residue polypeptide: Histidinol dehydrogenase homolog (433 aa).

Gln-249 and His-252 together coordinate Zn(2+). Catalysis depends on proton acceptor residues Glu-319 and His-320. Zn(2+)-binding residues include Asp-353 and His-412.

It belongs to the histidinol dehydrogenase family. Requires Zn(2+) as cofactor.

The sequence is that of Histidinol dehydrogenase homolog from Ruegeria pomeroyi (strain ATCC 700808 / DSM 15171 / DSS-3) (Silicibacter pomeroyi).